Consider the following 410-residue polypeptide: Chloroacetanilide N-alkylformylase, ferredoxin reductase component (410 aa).

The FAD site is built by G14, D36, K49, V82, R130, D279, and V298.

The protein belongs to the FAD-dependent oxidoreductase family. The chloroacetanilide N-alkylformylase multicomponent enzyme system is composed of an oxygenase component (CndA) and an electron transfer component formed by a ferredoxin reductase (CndC1) and a ferredoxin (CndB1). In vitro, chloroacetanilide N-alkylformylase assays in which CndB1 is substituted for CndB2 demonstrate that the two enzymes possess nearly identical activities. FAD is required as a cofactor.

The catalysed reaction is 2 reduced [2Fe-2S]-[ferredoxin] + NAD(+) + H(+) = 2 oxidized [2Fe-2S]-[ferredoxin] + NADH. Component of the chloroacetanilide N-alkylformylase multicomponent enzyme system involved in the degradation of chloroacetanilide herbicides (N-alkoxyalkyl-N-chloroacetyl-substituted aniline derivatives). In vitro, catalyzes the transfers of electrons from ferredoxin (CndB1) to NADH. N-dealkylase utilizes NADH, but not NADPH, as the electron donor. The protein is Chloroacetanilide N-alkylformylase, ferredoxin reductase component of Rhizorhabdus wittichii (strain DC-6 / KACC 16600) (Sphingomonas wittichii).